Here is a 307-residue protein sequence, read N- to C-terminus: Taste receptor type 2 member 10 (307 aa).

Topologically, residues 1–6 (MLRVVE) are extracellular. The helical transmembrane segment at 7–27 (GIFIFVVVSESVFGVLGNGFI) threads the bilayer. Topologically, residues 28–42 (GLVNCIDCAKNKLST) are cytoplasmic. A helical transmembrane segment spans residues 43 to 63 (IGFILTGLAISRIFLIWIIIT). Over 64-100 (DGFIQIFSPNIYASGNLIEYISYFWVIGNQSSMWFAT) the chain is Extracellular. The N-linked (GlcNAc...) asparagine glycan is linked to N92. The helical transmembrane segment at 101–121 (SLSIFYFLKIANFSNYIFLWL) threads the bilayer. Over 122-126 (KSRTN) the chain is Cytoplasmic. The helical transmembrane segment at 127–147 (MVLPFMIVFLLISSLLNFAYI) threads the bilayer. The Extracellular segment spans residues 148 to 179 (AKILNDYKTKNDTVWDLNMYKSEYFIKQILLN). N-linked (GlcNAc...) asparagine glycosylation occurs at N158. The helical transmembrane segment at 180-200 (LGVIFFFTLSLITCIFLIISL) threads the bilayer. The Cytoplasmic segment spans residues 201–227 (WRHNRQMQSNVTGLRDSNTEAHVKAMK). Residues 228-248 (VLISFIILFILYFIGMAIEIS) form a helical membrane-spanning segment. At 249–257 (CFTVRENKL) the chain is on the extracellular side. A helical transmembrane segment spans residues 258–278 (LLMFGMTTTAIYPWGHSFILI). The Cytoplasmic segment spans residues 279–307 (LGNSKLKQASLRVLQQLKCCEKRKNLRVT).

The protein belongs to the G-protein coupled receptor T2R family. Expressed in subsets of taste receptor cells of the tongue and palate epithelium and exclusively in gustducin-positive cells.

The protein localises to the membrane. Functionally, gustducin-coupled strychnine receptor implicated in the perception of bitter compounds in the oral cavity and the gastrointestinal tract. Signals through PLCB2 and the calcium-regulated cation channel TRPM5. This chain is Taste receptor type 2 member 10 (TAS2R10), found in Homo sapiens (Human).